Here is a 534-residue protein sequence, read N- to C-terminus: Arginine--tRNA ligase (534 aa).

The 'HIGH' region motif lies at 120-130; the sequence is ANPTGFLHLGH.

Belongs to the class-I aminoacyl-tRNA synthetase family. In terms of assembly, monomer.

The protein localises to the cytoplasm. The catalysed reaction is tRNA(Arg) + L-arginine + ATP = L-arginyl-tRNA(Arg) + AMP + diphosphate. The chain is Arginine--tRNA ligase from Mesomycoplasma hyopneumoniae (strain 7448) (Mycoplasma hyopneumoniae).